A 368-amino-acid chain; its full sequence is Putative phospho-2-dehydro-3-deoxyheptonate aldolase (368 aa).

The protein belongs to the class-I DAHP synthase family.

It carries out the reaction D-erythrose 4-phosphate + phosphoenolpyruvate + H2O = 7-phospho-2-dehydro-3-deoxy-D-arabino-heptonate + phosphate. The protein operates within metabolic intermediate biosynthesis; chorismate biosynthesis; chorismate from D-erythrose 4-phosphate and phosphoenolpyruvate: step 1/7. Stereospecific condensation of phosphoenolpyruvate (PEP) and D-erythrose-4-phosphate (E4P) giving rise to 3-deoxy-D-arabino-heptulosonate-7-phosphate (DAHP). This is Putative phospho-2-dehydro-3-deoxyheptonate aldolase from Schizosaccharomyces pombe (strain 972 / ATCC 24843) (Fission yeast).